Consider the following 347-residue polypeptide: MTFETAEGLADQVLKFLSDKLETNYRVAVIVVGPPGSGKSTISEKLCHEINSRYNKYLKESGSRPHLQENLNERIDLCEGIPKFEEKSLHDVQNGFFNHVQDQDFQPKKFVDKNDGSEVVVGIGGLPNSIRVENVAPLEPSNHDYKIAKIVPMDGFHLSRRHLDHFDDPVEAHRRRGSPPTFDSNNCLQLCKLLAKTCTIKPTLPVNKTTADTGTLFDKISDTFSESVPSIYVPGFDHALKDPSTGQHCVDAFTRIIVLEGLYLLLDEDNWRDIYPTFKDTHAVIVWKLDLGVDVLEQRVAKRHLQSGLAATLEAGVERFRMNDLINALRIKEHCLAADDIVSISNK.

Residue 33–41 (GPPGSGKST) participates in ATP binding.

Belongs to the YFH7 family.

Its function is as follows. ATP-dependent kinase that could be involved in endoplasmic reticulum membrane assembly. The sequence is that of ATP-dependent kinase YFH7 (YFH7) from Lachancea thermotolerans (strain ATCC 56472 / CBS 6340 / NRRL Y-8284) (Yeast).